Consider the following 167-residue polypeptide: NAD(P)H-quinone oxidoreductase subunit I, chloroplastic (167 aa).

2 consecutive 4Fe-4S ferredoxin-type domains span residues 55–84 (GRIH…VDWK) and 95–124 (LNYS…MTEE). [4Fe-4S] cluster-binding residues include cysteine 64, cysteine 67, cysteine 70, cysteine 74, cysteine 104, cysteine 107, cysteine 110, and cysteine 114.

This sequence belongs to the complex I 23 kDa subunit family. As to quaternary structure, NDH is composed of at least 16 different subunits, 5 of which are encoded in the nucleus. [4Fe-4S] cluster serves as cofactor.

Its subcellular location is the plastid. It localises to the chloroplast thylakoid membrane. The catalysed reaction is a plastoquinone + NADH + (n+1) H(+)(in) = a plastoquinol + NAD(+) + n H(+)(out). It carries out the reaction a plastoquinone + NADPH + (n+1) H(+)(in) = a plastoquinol + NADP(+) + n H(+)(out). In terms of biological role, NDH shuttles electrons from NAD(P)H:plastoquinone, via FMN and iron-sulfur (Fe-S) centers, to quinones in the photosynthetic chain and possibly in a chloroplast respiratory chain. The immediate electron acceptor for the enzyme in this species is believed to be plastoquinone. Couples the redox reaction to proton translocation, and thus conserves the redox energy in a proton gradient. This Lobularia maritima (Sweet alyssum) protein is NAD(P)H-quinone oxidoreductase subunit I, chloroplastic.